The sequence spans 113 residues: Large ribosomal subunit protein bL19 (113 aa).

Belongs to the bacterial ribosomal protein bL19 family.

In terms of biological role, this protein is located at the 30S-50S ribosomal subunit interface and may play a role in the structure and function of the aminoacyl-tRNA binding site. This Rhodococcus erythropolis (strain PR4 / NBRC 100887) protein is Large ribosomal subunit protein bL19.